A 121-amino-acid polypeptide reads, in one-letter code: Large ribosomal subunit protein uL22c (121 aa).

This sequence belongs to the universal ribosomal protein uL22 family. In terms of assembly, part of the 50S ribosomal subunit.

The protein localises to the plastid. The protein resides in the chloroplast. Functionally, this protein binds specifically to 23S rRNA. In terms of biological role, the globular domain of the protein is located near the polypeptide exit tunnel on the outside of the subunit, while an extended beta-hairpin is found that lines the wall of the exit tunnel in the center of the 70S ribosome. The protein is Large ribosomal subunit protein uL22c (rpl22) of Welwitschia mirabilis (Tree tumbo).